A 99-amino-acid chain; its full sequence is Large ribosomal subunit protein uL23 (99 aa).

It belongs to the universal ribosomal protein uL23 family. In terms of assembly, part of the 50S ribosomal subunit. Contacts protein L29, and trigger factor when it is bound to the ribosome.

In terms of biological role, one of the early assembly proteins it binds 23S rRNA. One of the proteins that surrounds the polypeptide exit tunnel on the outside of the ribosome. Forms the main docking site for trigger factor binding to the ribosome. The sequence is that of Large ribosomal subunit protein uL23 from Synechococcus sp. (strain JA-2-3B'a(2-13)) (Cyanobacteria bacterium Yellowstone B-Prime).